The primary structure comprises 476 residues: ATP synthase subunit beta (476 aa).

154-161 (GGAGVGKT) is an ATP binding site.

This sequence belongs to the ATPase alpha/beta chains family. In terms of assembly, F-type ATPases have 2 components, CF(1) - the catalytic core - and CF(0) - the membrane proton channel. CF(1) has five subunits: alpha(3), beta(3), gamma(1), delta(1), epsilon(1). CF(0) has four main subunits: a(1), b(1), b'(1) and c(9-12).

It localises to the cell inner membrane. It carries out the reaction ATP + H2O + 4 H(+)(in) = ADP + phosphate + 5 H(+)(out). In terms of biological role, produces ATP from ADP in the presence of a proton gradient across the membrane. The catalytic sites are hosted primarily by the beta subunits. In Rhodopseudomonas palustris (strain ATCC BAA-98 / CGA009), this protein is ATP synthase subunit beta.